The sequence spans 267 residues: Ribosomal RNA small subunit methyltransferase A (267 aa).

The S-adenosyl-L-methionine site is built by N18, L20, G45, E66, D91, and N112.

The protein belongs to the class I-like SAM-binding methyltransferase superfamily. rRNA adenine N(6)-methyltransferase family. RsmA subfamily.

It is found in the cytoplasm. It carries out the reaction adenosine(1518)/adenosine(1519) in 16S rRNA + 4 S-adenosyl-L-methionine = N(6)-dimethyladenosine(1518)/N(6)-dimethyladenosine(1519) in 16S rRNA + 4 S-adenosyl-L-homocysteine + 4 H(+). Functionally, specifically dimethylates two adjacent adenosines (A1518 and A1519) in the loop of a conserved hairpin near the 3'-end of 16S rRNA in the 30S particle. May play a critical role in biogenesis of 30S subunits. This chain is Ribosomal RNA small subunit methyltransferase A, found in Shewanella denitrificans (strain OS217 / ATCC BAA-1090 / DSM 15013).